Here is a 333-residue protein sequence, read N- to C-terminus: Eukaryotic translation initiation factor 2 subunit 2 (333 aa).

Disordered regions lie at residues 1–119 (MSGD…DLDI) and 139–164 (ILEKDEALEDEDNKKDDGISFSNQTG). At Ser-2 the chain carries N-acetylserine. Phosphoserine occurs at positions 2 and 13. Residues 13-22 (SKKKKKKKKP) show a composition bias toward basic residues. Thr-31 and Thr-36 each carry phosphothreonine. The span at 40–51 (ETKEVEPEPTED) shows a compositional bias: basic and acidic residues. Ser-67 is subject to Phosphoserine. Positions 96–105 (EGVKDLKIES) are enriched in basic and acidic residues. A Glycyl lysine isopeptide (Lys-Gly) (interchain with G-Cter in SUMO2) cross-link involves residue Lys-102. Ser-105 bears the Phosphoserine mark. 2 stretches are compositionally biased toward acidic residues: residues 106–118 (DVQEPTEPEDDLD) and 139–149 (ILEKDEALEDE). At Thr-111 the chain carries Phosphothreonine. Ser-158 and Ser-218 each carry phosphoserine. 2 positions are modified to N6-acetyllysine: Lys-265 and Lys-293. The segment at 281-305 (CHTCRSPDTILQKDTRLYFLQCETC) adopts a C4-type zinc-finger fold.

The protein belongs to the eIF-2-beta/eIF-5 family. Eukaryotic translation initiation factor 2 eIF2 is a heterotrimeric complex composed of an alpha (EIF2S1), a beta (EIF2S2) and a gamma (EIF2S3) chain. eIF2 is member of the 43S pre-initiation complex (43S PIC). eIF2 forms a complex with at least CELF1/CUGBP1, CALR, CALR3, EIF2S1, EIF2S2, HSP90B1 and HSPA5. Interacts with BZW2/5MP1. Interacts with EIF5.

It localises to the cytoplasm. The protein resides in the cytosol. In terms of biological role, component of the eIF2 complex that functions in the early steps of protein synthesis by forming a ternary complex with GTP and initiator tRNA. This complex binds to a 40S ribosomal subunit, followed by mRNA binding to form the 43S pre-initiation complex (43S PIC). Junction of the 60S ribosomal subunit to form the 80S initiation complex is preceded by hydrolysis of the GTP bound to eIF2 and release of an eIF2-GDP binary complex. In order for eIF2 to recycle and catalyze another round of initiation, the GDP bound to eIF2 must exchange with GTP by way of a reaction catalyzed by eIF2B. In Pongo abelii (Sumatran orangutan), this protein is Eukaryotic translation initiation factor 2 subunit 2 (EIF2S2).